We begin with the raw amino-acid sequence, 229 residues long: Zinc finger matrin-type protein 4 (229 aa).

4 Matrin-type zinc fingers span residues 14–44, 72–106, 145–175, and 198–228; these read SYCKVCSAQLISESQRVAHYESRKHASKVRL, DKNKCCTLCNMSFTSAVVADSHYQGKIHAKRLKLL, RYCGLCAAWFNNPLMAQQHYEGKKHKKNAAR, and YRCTTCSVSLNSIEQYHAHLQGSKHQTNLKN.

It localises to the nucleus. This is Zinc finger matrin-type protein 4 (Zmat4) from Mus musculus (Mouse).